The sequence spans 352 residues: Cell division protein ZipA (352 aa).

Over methionine 1 to arginine 5 the chain is Periplasmic. A helical membrane pass occupies residues leucine 6 to threonine 26. Residues serine 27–alanine 352 are Cytoplasmic-facing. Residues phenylalanine 35–aspartate 54 are compositionally biased toward basic and acidic residues. The tract at residues phenylalanine 35 to threonine 56 is disordered.

This sequence belongs to the ZipA family. In terms of assembly, interacts with FtsZ via their C-terminal domains.

The protein localises to the cell inner membrane. Essential cell division protein that stabilizes the FtsZ protofilaments by cross-linking them and that serves as a cytoplasmic membrane anchor for the Z ring. Also required for the recruitment to the septal ring of downstream cell division proteins. This chain is Cell division protein ZipA, found in Photobacterium profundum (strain SS9).